The primary structure comprises 293 residues: Acetylglutamate kinase (293 aa).

Substrate is bound by residues 65–66 (GG), Arg87, and Asn188.

This sequence belongs to the acetylglutamate kinase family. ArgB subfamily.

The protein resides in the cytoplasm. It carries out the reaction N-acetyl-L-glutamate + ATP = N-acetyl-L-glutamyl 5-phosphate + ADP. It functions in the pathway amino-acid biosynthesis; L-arginine biosynthesis; N(2)-acetyl-L-ornithine from L-glutamate: step 2/4. In terms of biological role, catalyzes the ATP-dependent phosphorylation of N-acetyl-L-glutamate. The protein is Acetylglutamate kinase of Symbiobacterium thermophilum (strain DSM 24528 / JCM 14929 / IAM 14863 / T).